We begin with the raw amino-acid sequence, 774 residues long: Transforming acidic coiled-coil-containing protein 1 (774 aa).

Ala2 is subject to N-acetylalanine. The tract at residues 2–56 (AFSPWQILSPVQWAKWTWSAVRGSGAGEDEAGGPEGDPEEEEDSQAETKSLSFSS) is interaction with LSM7 and SNRPG. Phosphoserine is present on residues Ser4, Ser10, and Ser45. Residues 21–142 (AVRGSGAGED…VKDVRGKAEH (122 aa)) form a disordered region. The segment covering 28 to 46 (GEDEAGGPEGDPEEEEDSQ) has biased composition (acidic residues). Positions 48–61 (ETKSLSFSSDSEGN) are enriched in polar residues. Basic and acidic residues predominate over residues 88–99 (PEAKPQESREAD). The span at 113 to 128 (DTCSRSSENEAPQATV) shows a compositional bias: polar residues. The segment covering 131 to 142 (HPVKDVRGKAEH) has biased composition (basic and acidic residues). Residues Ser148 and Ser154 each carry the phosphoserine modification. The interval 153–255 (FSIETRNCTD…PEMLMEGSPL (103 aa)) is interaction with TDRD7. Residues 207–424 (EAFTEASLKT…NNINTDDSGD (218 aa)) are interaction with YEATS4. The disordered stretch occupies residues 214 to 428 (LKTGGPCPEP…TDDSGDPCKP (215 aa)). SPAZ domains lie at 216–294 (TGGP…TAGV) and 354–504 (SKPV…TDEE). Phosphoserine; by AURKC is present on Ser228. Residues 228-241 (SKLRKPKPVSLRKK) show a composition bias toward basic residues. Phosphoserine is present on residues Ser376 and Ser401. The segment covering 397 to 407 (ILQNSPPLSSK) has biased composition (polar residues). The Bipartite nuclear localization signal signature appears at 452–468 (PKKAKSRLITSGCKVKK). A phosphoserine mark is found at Ser480 and Ser560. The stretch at 579 to 774 (IREEIITKEI…ELIAKLGKTD (196 aa)) forms a coiled coil. The segment at 670–774 (VLEGFKKNEE…ELIAKLGKTD (105 aa)) is interaction with CH-TOG.

It belongs to the TACC family. Interacts with CH-TOG and YEATS4. Interacts with the AURKA and AURKB and AURKC. Interacts with LSM7, TDRD7 and SNRPG. Interacts with GCN5L2 and PCAF. Interacts with the thyroid hormone receptors THRB and THRA, predominantly with isoform alpha-2. The interaction with THRA isoform alpha-1 and THRB is decreased in the presence of thyroid hormone T3. Interacts with RARA in the nucleus. Also interacts with other nuclear receptors, including ESR1, NR3C1, PPARG and RXRA, preferentially in the absence of their hormonal ligands.

It localises to the cytoplasm. The protein localises to the nucleus. It is found in the cytoskeleton. The protein resides in the microtubule organizing center. Its subcellular location is the centrosome. It localises to the midbody. In terms of biological role, involved in transcription regulation induced by nuclear receptors, including in T3 thyroid hormone and all-trans retinoic acid pathways. Might promote the nuclear localization of the receptors. Likely involved in the processes that promote cell division prior to the formation of differentiated tissues. The chain is Transforming acidic coiled-coil-containing protein 1 (Tacc1) from Mus musculus (Mouse).